Reading from the N-terminus, the 258-residue chain is Acetylglutamate kinase (258 aa).

Residues 44–45 (GG), Arg-66, and Asn-158 each bind substrate. ATP contacts are provided by residues 181–186 (DVSGIL) and 209–211 (IIT).

It belongs to the acetylglutamate kinase family. ArgB subfamily. In terms of assembly, homodimer.

The protein resides in the cytoplasm. The catalysed reaction is N-acetyl-L-glutamate + ATP = N-acetyl-L-glutamyl 5-phosphate + ADP. It functions in the pathway amino-acid biosynthesis; L-arginine biosynthesis; N(2)-acetyl-L-ornithine from L-glutamate: step 2/4. Catalyzes the ATP-dependent phosphorylation of N-acetyl-L-glutamate. In Escherichia coli O157:H7, this protein is Acetylglutamate kinase.